The following is a 122-amino-acid chain: Interferon alpha-inducible protein 27, mitochondrial (122 aa).

The transit peptide at 1–33 directs the protein to the mitochondrion; sequence MEASALTSSAVTSVAKVVRVASGSAVVLPLARI. Residues 34-57 form a helical membrane-spanning segment; that stretch reads ATVVIGGVVAMAAVPMVLSAMGFT. Lys-69 is covalently cross-linked (Glycyl lysine isopeptide (Lys-Gly) (interchain with G-Cter in ubiquitin)). 2 helical membrane-spanning segments follow: residues 71 to 91 and 99 to 119; these read MSAA…VATL and LSGL…AVIA. Residues 76-122 form a mediates interaction with SKP2 and hepatitis C virus non-structural protein NS5A region; sequence IANGGGVASGSLVATLQSLGATGLSGLTKFILGSIGSAIAAVIARFY. A required for hepatitis C virus non-structural protein NS5A degradation region spans residues 103-112; sequence TKFILGSIGS.

This sequence belongs to the IFI6/IFI27 family. Homodimer. Interacts with hepatitis C virus/HCV non-structural protein NS5A; promotes the ubiquitin-mediated proteasomal degradation of NS5A. Interacts with SKP2; promotes the ubiquitin-mediated proteasomal degradation of NS5A. Interacts with NR4A1. May interact with BCL2. In terms of processing, ubiquitinated by TRIM21 via 'Lys-6'-linked ubiquitin chains leading to IFI27 mitochondrial migration.

Its subcellular location is the mitochondrion membrane. It is found in the nucleus inner membrane. It localises to the endoplasmic reticulum membrane. Its function is as follows. Probable adapter protein involved in different biological processes. Part of the signaling pathways that lead to apoptosis. Involved in type-I interferon-induced apoptosis characterized by a rapid and robust release of cytochrome C from the mitochondria and activation of BAX and caspases 2, 3, 6, 8 and 9. Also functions in TNFSF10-induced apoptosis. May also have a function in the nucleus, where it may be involved in the interferon-induced negative regulation of the transcriptional activity of NR4A1, NR4A2 and NR4A3 through the enhancement of XPO1-mediated nuclear export of these nuclear receptors. May thereby play a role in the vascular response to injury. In the innate immune response, has an antiviral activity towards hepatitis C virus/HCV. May prevent the replication of the virus by recruiting both the hepatitis C virus non-structural protein 5A/NS5A and the ubiquitination machinery via SKP2, promoting the ubiquitin-mediated proteasomal degradation of NS5A. Also promotes virus-induced pyroptosis by activating CASP3 in the mitochondria after 'Lys-6'-linked ubiquitination by TRIM21. The protein is Interferon alpha-inducible protein 27, mitochondrial of Homo sapiens (Human).